Here is a 347-residue protein sequence, read N- to C-terminus: MVCALGIEGSANKIGIGIIRDGKVLANVRRTYITPPGEGFLPKETAKHHREAILGLVESSLKEAQLKSSDLDVICYTKGPGMAPPLLVGAIVARTLSLLWNIPLLGVNHCIGHIEMGRLITGAQNPTVLYVSGGNTQVIAYSNKRYRIFGETIDIAVGNCLDRFARIIKLSNDPSPGYNIEQLAKSSNRYIKLPYVVKGMDVSFSGILSYIEDLAEPGKRQNKRKKPQEEEVNNYSQADLCYSLQETIFAMLVEITERAMAHCGSNEVLIVGGVGCNERLQEMMRIMCEERGGKLFATDERYCIDNGLMIAHAGAEMFRSGTRMPFEESYVTQRFRTDEVLVSWRDD.

Residues histidine 109, histidine 113, and tyrosine 130 each coordinate a divalent metal cation. Substrate contacts are provided by residues tyrosine 130–glycine 134, aspartate 162, glycine 177, glutamate 181, and asparagine 277. Aspartate 305 contributes to the a divalent metal cation binding site.

This sequence belongs to the KAE1 / TsaD family. Component of the EKC/KEOPS complex; the whole complex dimerizes. Requires a divalent metal cation as cofactor.

It is found in the cytoplasm. Its subcellular location is the nucleus. It catalyses the reaction L-threonylcarbamoyladenylate + adenosine(37) in tRNA = N(6)-L-threonylcarbamoyladenosine(37) in tRNA + AMP + H(+). Component of the EKC/KEOPS complex that is required for the formation of a threonylcarbamoyl group on adenosine at position 37 (t(6)A37) in tRNAs that read codons beginning with adenine. The complex is probably involved in the transfer of the threonylcarbamoyl moiety of threonylcarbamoyl-AMP (TC-AMP) to the N6 group of A37. Likely plays a direct catalytic role in this reaction, but requires other protein(s) of the complex to fulfill this activity. This is Probable tRNA N6-adenosine threonylcarbamoyltransferase from Drosophila melanogaster (Fruit fly).